The following is a 497-amino-acid chain: MSGGGGEMEERLLNGSETEQRRESLYLRKKIWSEVRKMWRIALPSTLFRVMSFGCVVVAQAFIGHSSETGLAAYALLQSTFIRFIYGIMAGMSSATETLCGQAYGAEQYHMMGIYLQRSWIVDTFIATLFVPFIVLAGPILRLLGQNVVISETVDEIYPWVIPYLYSIVFTMTMQMYLQAQMKNAIIGILSTLALVLDIAATWWCVSVMGMGIHGALLGLNISSWSVAIAEFVYVFGGWCPHTWTGFSTAAFLDLIPMLKLSISSGFMLCLEYWYMSIIVLMSGYAKDANIAISAFSICQYIYSWEMNICFGLMGAACVRVANELGKGDADAVRFSIKVVLVVSAVIGVICSALCLAFGGQISYLFSDSQAVSDAVADLSIVLSISILFNIIQPILSGVAIGAGMQSMVALVNLASYYAIGVPLGVLLVYVFNFGIKGLWSGMLAGVGIQTLILCYVIYKTDWELEVKKTNERMKTWTLNLPAVQSTTISTRDEERK.

Transmembrane regions (helical) follow at residues 43–63 (LPSTLFRVMSFGCVVVAQAFI), 70–90 (GLAAYALLQSTFIRFIYGIMA), 121–141 (IVDTFIATLFVPFIVLAGPIL), 157–177 (IYPWVIPYLYSIVFTMTMQMY), 186–206 (IIGILSTLALVLDIAATWWCV), 216–236 (ALLGLNISSWSVAIAEFVYVF), 261–281 (LSISSGFMLCLEYWYMSIIVL), 291–311 (IAISAFSICQYIYSWEMNICF), 339–359 (VVLVVSAVIGVICSALCLAFG), 381–401 (IVLSISILFNIIQPILSGVAI), 416–436 (SYYAIGVPLGVLLVYVFNFGI), and 438–458 (GLWSGMLAGVGIQTLILCYVI).

Belongs to the multi antimicrobial extrusion (MATE) (TC 2.A.66.1) family.

The protein resides in the membrane. This Arabidopsis thaliana (Mouse-ear cress) protein is Protein DETOXIFICATION 25.